We begin with the raw amino-acid sequence, 390 residues long: UPF0229 protein OB2647 (390 aa).

A disordered region spans residues 99-121; it reads NASQQGQQGQGNGKKAGDQPGTD.

This sequence belongs to the UPF0229 family.

In Oceanobacillus iheyensis (strain DSM 14371 / CIP 107618 / JCM 11309 / KCTC 3954 / HTE831), this protein is UPF0229 protein OB2647.